The primary structure comprises 458 residues: Protein RICE SALT SENSITIVE 3 (458 aa).

Residues 1-17 (MVGSGAAGGGGGGGGGG) are compositionally biased toward gly residues. Disordered stretches follow at residues 1–21 (MVGS…DHAR), 220–325 (TSPS…PEGD), 354–374 (GGGA…GHGG), and 386–458 (SHSN…TFLE). Residues 220 to 232 (TSPSPSSFPLKQQ) show a composition bias toward low complexity. Residues 245-262 (HAPPQLPPGASPLFPPGP) are compositionally biased toward pro residues. The span at 308–317 (QQPMAAPQQH) shows a compositional bias: low complexity. A compositionally biased stretch (low complexity) spans 413-436 (SSSTTSTSPSVSASTAPAPPQQQQ).

Interacts with BHLH094, BHLH089, TIFY11A/JAZ9 and TIFY11C/JAZ11. Forms a ternary complex with TIFY11A/JAZ9 and BHLH094 in the nucleus. In terms of tissue distribution, expressed in root tips. Expressed at high levels in the meristematic zone and at low levels in the elongation zone of the root tip.

Its subcellular location is the nucleus. It localises to the cytoplasm. Functionally, involved in the repression of jasmonate (JA)-induced genes. Forms a ternary complex with TIFY11A/JAZ9 and BHLH094 to negatively regulate JA-responsive genes. Involved in transcriptional regulation in the root tip. Plays a regulatory role in root cell elongation. Regulates root cell elongation during salt stress. This Oryza sativa subsp. japonica (Rice) protein is Protein RICE SALT SENSITIVE 3.